A 344-amino-acid polypeptide reads, in one-letter code: Heat-inducible transcription repressor HrcA (344 aa).

It belongs to the HrcA family.

Its function is as follows. Negative regulator of class I heat shock genes (grpE-dnaK-dnaJ and groELS operons). Prevents heat-shock induction of these operons. The chain is Heat-inducible transcription repressor HrcA from Streptococcus pneumoniae (strain P1031).